We begin with the raw amino-acid sequence, 242 residues long: DNA repair protein RecO (242 aa).

It belongs to the RecO family. Monomer.

Involved in DNA repair and RecF pathway recombination. This is DNA repair protein RecO from Shigella sonnei (strain Ss046).